The chain runs to 445 residues: Protein kinase C and casein kinase substrate in neurons protein 1 (445 aa).

Positions 12-282 (DETTDSFWEV…TIVSASAQED (271 aa)) constitute an F-BAR domain. 2 coiled-coil regions span residues 146 to 167 (AKKL…KEEK) and 183 to 219 (TTDQ…NKCT). Residues 327–390 (LTQVTHGAEH…PFEEDSKGVR (64 aa)) form a disordered region. 2 stretches are compositionally biased toward polar residues: residues 338–358 (TPQT…QYSA) and 368–379 (TAAQSASETNGG). An SH3 domain is found at 386–445 (SKGVRVRALYDYEGQEQDELTFKAGDELTKLEDEDEQGWCKGRLDSGQLGLYPANYVEPV).

In terms of assembly, interacts with cobl.

It localises to the cytoplasm. The protein resides in the cytosol. It is found in the cell membrane. The protein localises to the cell projection. Its subcellular location is the synapse. It localises to the synaptosome. The protein resides in the cytoplasmic vesicle membrane. It is found in the ruffle membrane. The protein localises to the membrane. Binds to membranes via its F-BAR domain and mediates membrane tubulation. Plays a role in cellular transport processes by recruiting dynamins to membranes. Plays a role in the reorganization of the actin cytoskeleton and in neuron morphogenesis via its interaction with cobl, and by recruiting cobl to the cell cortex. Plays a role in the regulation of neurite formation, neurite branching and the regulation of neurite length. Required for normal synaptic vesicle endocytosis; this process retrieves previously released neurotransmitters to accommodate multiple cycles of neurotransmission. Required for normal excitatory and inhibitory synaptic transmission. Required for normal embryonic development, including normal development of laterality, normal body size and shape, as well as normal brain and heart development. Required for normal development of stereocilia and kinocilia in sensory hair cells of neuromasts in the posterior lateral line organ, and thus also for balance keeping and normal swimming behavior. This chain is Protein kinase C and casein kinase substrate in neurons protein 1 (pacsin1b), found in Danio rerio (Zebrafish).